The primary structure comprises 174 residues: UPF0340 protein SH0921 (174 aa).

Belongs to the UPF0340 family.

The sequence is that of UPF0340 protein SH0921 from Staphylococcus haemolyticus (strain JCSC1435).